The chain runs to 106 residues: Putative toxin Rv3098A/RVBD_3098A (106 aa).

The protein belongs to the PemK/MazF family. As to quaternary structure, forms a complex with cognate antitoxin Rv3098B/RVBD_3098B.

In terms of biological role, putative toxic component of a possible type II toxin-antitoxin (TA) system. Its toxic effect may be neutralized by cognate antitoxin Rv3098B/RVBD_3098B. In Mycobacterium tuberculosis (strain ATCC 25618 / H37Rv), this protein is Putative toxin Rv3098A/RVBD_3098A.